A 358-amino-acid polypeptide reads, in one-letter code: Peptide chain release factor 1 (358 aa).

Gln-233 carries the post-translational modification N5-methylglutamine.

The protein belongs to the prokaryotic/mitochondrial release factor family. In terms of processing, methylated by PrmC. Methylation increases the termination efficiency of RF1.

The protein localises to the cytoplasm. Functionally, peptide chain release factor 1 directs the termination of translation in response to the peptide chain termination codons UAG and UAA. The sequence is that of Peptide chain release factor 1 from Staphylococcus saprophyticus subsp. saprophyticus (strain ATCC 15305 / DSM 20229 / NCIMB 8711 / NCTC 7292 / S-41).